Reading from the N-terminus, the 274-residue chain is 2-dehydro-3-deoxyphosphooctonate aldolase (274 aa).

It belongs to the KdsA family.

It is found in the cytoplasm. The catalysed reaction is D-arabinose 5-phosphate + phosphoenolpyruvate + H2O = 3-deoxy-alpha-D-manno-2-octulosonate-8-phosphate + phosphate. The protein operates within carbohydrate biosynthesis; 3-deoxy-D-manno-octulosonate biosynthesis; 3-deoxy-D-manno-octulosonate from D-ribulose 5-phosphate: step 2/3. It functions in the pathway bacterial outer membrane biogenesis; lipopolysaccharide biosynthesis. This Rickettsia bellii (strain OSU 85-389) protein is 2-dehydro-3-deoxyphosphooctonate aldolase.